Reading from the N-terminus, the 279-residue chain is Thymidylate synthase 1 (279 aa).

141–142 is a binding site for dUMP; that stretch reads RR. The Nucleophile role is filled by Cys161. Residues 181–184, Asn192, and 222–224 contribute to the dUMP site; these read RSND and HVY. Asp184 contributes to the (6R)-5,10-methylene-5,6,7,8-tetrahydrofolate binding site. Ala278 serves as a coordination point for (6R)-5,10-methylene-5,6,7,8-tetrahydrofolate.

Belongs to the thymidylate synthase family. Bacterial-type ThyA subfamily. As to quaternary structure, homodimer.

Its subcellular location is the cytoplasm. The enzyme catalyses dUMP + (6R)-5,10-methylene-5,6,7,8-tetrahydrofolate = 7,8-dihydrofolate + dTMP. Its pathway is pyrimidine metabolism; dTTP biosynthesis. Functionally, catalyzes the reductive methylation of 2'-deoxyuridine-5'-monophosphate (dUMP) to 2'-deoxythymidine-5'-monophosphate (dTMP) while utilizing 5,10-methylenetetrahydrofolate (mTHF) as the methyl donor and reductant in the reaction, yielding dihydrofolate (DHF) as a by-product. This enzymatic reaction provides an intracellular de novo source of dTMP, an essential precursor for DNA biosynthesis. The sequence is that of Thymidylate synthase 1 from Bacillus spizizenii (strain ATCC 23059 / NRRL B-14472 / W23) (Bacillus subtilis subsp. spizizenii).